We begin with the raw amino-acid sequence, 317 residues long: MQYIELLIMFLSVLLAVAFLTVAERKTLGYMQRRVGPNAVGYYGILMAIADAAKLLLKEIVVPTHADKLILFVSPMISLISALLCWSVIPFAPGVTIYDSNYGFILTLAISSVGVFGTLLAGWSANSKYSLLGSIRSTAQLISYELVLTTIILLCILIGGTMNVSKYIEIQQAIWYGIPLLPLAIIFFIGCVAECARPPFDNVEAESELVSGHMTEYSSSIFVLFFLSEYASILFLSTLTAILFMGGGTGIILGLKANLFAFTYIWVRATLPRVRYDKLINLCWMIFLPILFGSAIAVPAYLYALDAIIILYRPGGL.

9 helical membrane passes run 3-23 (YIEL…LTVA), 37-57 (PNAV…KLLL), 69-89 (LILF…WSVI), 103-123 (GFIL…LAGW), 141-161 (LISY…IGGT), 173-193 (AIWY…GCVA), 207-227 (SELV…LFFL), 247-267 (GGTG…YIWV), and 282-302 (LCWM…PAYL).

Belongs to the complex I subunit 1 family.

It localises to the mitochondrion inner membrane. The enzyme catalyses a ubiquinone + NADH + 5 H(+)(in) = a ubiquinol + NAD(+) + 4 H(+)(out). In terms of biological role, core subunit of the mitochondrial membrane respiratory chain NADH dehydrogenase (Complex I) that is believed to belong to the minimal assembly required for catalysis. Complex I functions in the transfer of electrons from NADH to the respiratory chain. The immediate electron acceptor for the enzyme is believed to be ubiquinone. The polypeptide is NADH-ubiquinone oxidoreductase chain 1 (NAD1) (Candida albicans (strain SC5314 / ATCC MYA-2876) (Yeast)).